Here is a 474-residue protein sequence, read N- to C-terminus: Pyoverdine export outer membrane protein OpmQ (474 aa).

The first 17 residues, 1–17 (MSMKNLSLISACLLLGA), serve as a signal peptide directing secretion. A lipid anchor (N-palmitoyl cysteine) is attached at Cys18. A lipid anchor (S-diacylglycerol cysteine) is attached at Cys18.

Belongs to the outer membrane factor (OMF) (TC 1.B.17) family. In terms of assembly, part of the tripartite efflux system PvdRT-OpmQ, which is composed of an inner membrane component with both ATPase and permease domains, PvdT, a periplasmic membrane fusion protein, PvdR, and an outer membrane component, OpmQ.

The protein localises to the cell outer membrane. Functionally, part of the tripartite efflux system PvdRT-OpmQ required for the secretion into the extracellular milieu of the siderophore pyoverdine (PVD), which is involved in iron acquisition. The system is responsible for export of newly synthesized PVD after the final steps of biosynthesis have taken place in the periplasm. It is also responsible for recycling of PVD after internalization of ferri-PVD into the periplasm by the outer-membrane receptor FpvA and release of iron from PVD, thus making PVD available for new cycles of iron uptake. In addition, can expel unwanted metals complexed with PVD from the periplasm into the extracellular medium. The polypeptide is Pyoverdine export outer membrane protein OpmQ (Pseudomonas aeruginosa (strain ATCC 15692 / DSM 22644 / CIP 104116 / JCM 14847 / LMG 12228 / 1C / PRS 101 / PAO1)).